The sequence spans 669 residues: Translation factor GUF1, mitochondrial (669 aa).

Residues 1–49 (MWTLAGQGWWRGRALAAWVTEAARKGLLWPHLAPARGTAAESRAPDRCY) constitute a mitochondrion transit peptide. The tr-type G domain occupies 66-247 (ENTRNFSIIA…AVIKRIPFPK (182 aa)). GTP-binding positions include 75 to 82 (AHVDHGKS), 140 to 144 (DTPGH), and 194 to 197 (NKID).

Belongs to the TRAFAC class translation factor GTPase superfamily. Classic translation factor GTPase family. LepA subfamily.

The protein resides in the mitochondrion inner membrane. It catalyses the reaction GTP + H2O = GDP + phosphate + H(+). In terms of biological role, promotes mitochondrial protein synthesis. May act as a fidelity factor of the translation reaction, by catalyzing a one-codon backward translocation of tRNAs on improperly translocated ribosomes. Binds to mitochondrial ribosomes in a GTP-dependent manner. In Bos taurus (Bovine), this protein is Translation factor GUF1, mitochondrial.